We begin with the raw amino-acid sequence, 72 residues long: Nod factor export ATP-binding protein I (72 aa).

Belongs to the ABC transporter superfamily. Lipooligosaccharide exporter (TC 3.A.1.102) family. The complex is composed of two ATP-binding proteins (NodI) and two transmembrane proteins (NodJ).

It is found in the cell inner membrane. Its function is as follows. Part of the ABC transporter complex NodIJ involved in the export of the nodulation factors (Nod factors), the bacterial signal molecules that induce symbiosis and subsequent nodulation induction. Nod factors are LCO (lipo-chitin oligosaccharide), a modified beta-1,4-linked N-acetylglucosamine oligosaccharide. This subunit is responsible for energy coupling to the transport system. This Rhizobium leguminosarum bv. trifolii protein is Nod factor export ATP-binding protein I.